Here is a 608-residue protein sequence, read N- to C-terminus: Glutamine--fructose-6-phosphate aminotransferase [isomerizing] (608 aa).

Cysteine 2 acts as the Nucleophile; for GATase activity in catalysis. The region spanning 2–218 (CGICGIVGHQ…DGDWCELTPD (217 aa)) is the Glutamine amidotransferase type-2 domain. 2 consecutive SIS domains span residues 284–423 (MPFD…ARGT) and 456–598 (MAAV…VDQP). Lysine 603 functions as the For Fru-6P isomerization activity in the catalytic mechanism.

As to quaternary structure, homodimer.

It localises to the cytoplasm. The catalysed reaction is D-fructose 6-phosphate + L-glutamine = D-glucosamine 6-phosphate + L-glutamate. Its function is as follows. Catalyzes the first step in hexosamine metabolism, converting fructose-6P into glucosamine-6P using glutamine as a nitrogen source. The polypeptide is Glutamine--fructose-6-phosphate aminotransferase [isomerizing] (Gluconobacter oxydans (strain 621H) (Gluconobacter suboxydans)).